The sequence spans 594 residues: Arginine--tRNA ligase (594 aa).

A 'HIGH' region motif is present at residues 139 to 149 (ANPTGPLHVGH).

Belongs to the class-I aminoacyl-tRNA synthetase family. Monomer.

It is found in the cytoplasm. The enzyme catalyses tRNA(Arg) + L-arginine + ATP = L-arginyl-tRNA(Arg) + AMP + diphosphate. The protein is Arginine--tRNA ligase of Burkholderia pseudomallei (strain 1106a).